The following is a 691-amino-acid chain: MNRFWNTKKFSLTNADGLCATLNEISQNDEVLVVQPSVLPVLNSLLTFQDLTQSTPVRKITLLDDQLSDDLPSALGSVPQMDLIFLIDVRTSLRLPPQLLDAAQKHNLSSLHIIYCRWKPSFQNTLEDTEQWQKDGFDLNSKKTHFPNVIESQLKELSNEYTLYPWDLLPFPQIDENVLLTHSLYNMENVNMYYPNLRSLQSATESILVDDMVNSLQSLIFETNSIITNVVSIGNLSKRCSHLLKKRIDEHQTENDLFIKGTLYGERTNCGLEMDLIILERNTDPITPLLTQLTYAGILDDLYEFNSGIKIKEKDMNFNYKEDKIWNDLKFLNFGSIGPQLNKLAKELQTQYDTRHKAESVHEIKEFVDSLGSLQQRQAFLKNHTTLSSDVLKVVETEEYGSFNKILELELEILMGNTLNNDIEDIILELQYQYEVDQKKILRLICLLSLCKNSLREKDYEYLRTFMIDSWGIEKCFQLESLAELGFFTSKTGKTDLHITTSKSTRLQKEYRYISQWFNTVPIEDEHAADKITNENDDFSEATFAYSGVVPLTMRLVQMLYDRSILFHNYSSQQPFILSREPRVSQTEDLIEQLYGDSHAIEESIWVPGTITKKINASIKSNNRRSIDGSNGTFHAAEDIALVVFLGGVTMGEIAIMKHLQKILGKKGINKRFIIIADGLINGTRIMNSIS.

Ser626 bears the Phosphoserine mark.

This sequence belongs to the STXBP/unc-18/SEC1 family. Component of the HOPS complex which is composed of PEP5, VPS16, PEP3, VPS33, VPS39 and VPS41. HOPS associates with phosphoinositides and the PX domain of VAM7. Interacts with IVY1 and VAM7.

The protein localises to the vacuole. Essential for vacuolar biogenesis, maturation and function. Involved in the sorting of vacuolar proteins from the Golgi apparatus and their targeting to the vacuole. Acts as a component of the HOPS complex that acts during the docking stage of vacuole fusion. HOPS is an effector for the vacuolar Rab GTPase YPT7 and is required for vacuolar SNARE complex assembly. It remains bound to SNARE complexes after vacuole fusion. The polypeptide is Vacuolar protein sorting-associated protein 33 (VPS33) (Saccharomyces cerevisiae (strain ATCC 204508 / S288c) (Baker's yeast)).